The chain runs to 353 residues: Farnesyl pyrophosphate synthase (353 aa).

3 residues coordinate isopentenyl diphosphate: Lys-57, Arg-60, and Gln-96. At Lys-57 the chain carries N6-(2-hydroxyisobutyryl)lysine; alternate. Lys-57 carries the post-translational modification N6-acetyllysine; alternate. Mg(2+) contacts are provided by Asp-103 and Asp-107. Arg-112 contributes to the dimethylallyl diphosphate binding site. Position 113 (Arg-113) interacts with isopentenyl diphosphate. Dimethylallyl diphosphate-binding residues include Lys-200, Thr-201, Gln-240, Lys-257, and Lys-266.

It belongs to the FPP/GGPP synthase family. Homodimer. Interacts with RSAD2. Interacts with bovine leukemia virus (BLV) protein G4. Requires Mg(2+) as cofactor.

The protein resides in the cytoplasm. It catalyses the reaction isopentenyl diphosphate + dimethylallyl diphosphate = (2E)-geranyl diphosphate + diphosphate. The enzyme catalyses isopentenyl diphosphate + (2E)-geranyl diphosphate = (2E,6E)-farnesyl diphosphate + diphosphate. The protein operates within isoprenoid biosynthesis; farnesyl diphosphate biosynthesis; farnesyl diphosphate from geranyl diphosphate and isopentenyl diphosphate: step 1/1. It functions in the pathway isoprenoid biosynthesis; geranyl diphosphate biosynthesis; geranyl diphosphate from dimethylallyl diphosphate and isopentenyl diphosphate: step 1/1. Inactivated by interferon-induced RSAD2. This inactivation may result of disruption of lipid rafts at the plasma membrane, and thus have an antiviral effect since many enveloped viruses need lipid rafts to bud efficiently out of the cell. Its function is as follows. Key enzyme in isoprenoid biosynthesis which catalyzes the formation of farnesyl diphosphate (FPP), a precursor for several classes of essential metabolites including sterols, dolichols, carotenoids, and ubiquinones. FPP also serves as substrate for protein farnesylation and geranylgeranylation. Catalyzes the sequential condensation of isopentenyl pyrophosphate with the allylic pyrophosphates, dimethylallyl pyrophosphate, and then with the resultant geranylpyrophosphate to the ultimate product farnesyl pyrophosphate. In Bos taurus (Bovine), this protein is Farnesyl pyrophosphate synthase (FDPS).